Reading from the N-terminus, the 182-residue chain is ATP-dependent protease subunit HslV (182 aa).

Residue threonine 12 is part of the active site. 3 residues coordinate Na(+): alanine 167, cysteine 170, and threonine 173.

It belongs to the peptidase T1B family. HslV subfamily. A double ring-shaped homohexamer of HslV is capped on each side by a ring-shaped HslU homohexamer. The assembly of the HslU/HslV complex is dependent on binding of ATP.

It is found in the cytoplasm. The enzyme catalyses ATP-dependent cleavage of peptide bonds with broad specificity.. Allosterically activated by HslU binding. Protease subunit of a proteasome-like degradation complex believed to be a general protein degrading machinery. This is ATP-dependent protease subunit HslV from Chlorobium phaeovibrioides (strain DSM 265 / 1930) (Prosthecochloris vibrioformis (strain DSM 265)).